The sequence spans 224 residues: MIKLGNDWDELLKDEFNQPYYLTLRQFLKKEYQTKKVFPDMYDIFNALKYTACKDVKVVILGQDPYHGPGQAHGLSFSVQQGVQIPPSLQNIYLELHNDLNCEIPNNGYLIRWADQGVLLLNTVLTVRAGQANSHRGQGWEILTNRIIEIINQKEEPVVFLLWGNNAKEKLQLLTNPKHTAFTSVHPSPLSASRGFMGCKHFSKTNQFLEQNGVKPIDWQIPSI.

D64 (proton acceptor) is an active-site residue.

The protein belongs to the uracil-DNA glycosylase (UDG) superfamily. UNG family.

It is found in the cytoplasm. The enzyme catalyses Hydrolyzes single-stranded DNA or mismatched double-stranded DNA and polynucleotides, releasing free uracil.. In terms of biological role, excises uracil residues from the DNA which can arise as a result of misincorporation of dUMP residues by DNA polymerase or due to deamination of cytosine. This chain is Uracil-DNA glycosylase 2, found in Listeria monocytogenes serotype 4b (strain F2365).